The primary structure comprises 264 residues: Astacin-like metalloprotease toxin 1 (264 aa).

A signal peptide spans 1-16 (MIKYIGVFAFLVGGFC). Positions 17–51 (HDFETVISNQDPIVDGMRLVEGDMLFDDGPLFTER) are excised as a propeptide. A Peptidase M12A domain is found at 52–249 (NAVKYDQQLW…VKVNKLYKCP (198 aa)). 2 cysteine pairs are disulfide-bonded: C93/C248 and C114/C135. H143 contacts Zn(2+). E144 is an active-site residue. 2 residues coordinate Zn(2+): H147 and H153. N173 and N185 each carry an N-linked (GlcNAc...) asparagine glycan.

In terms of assembly, monomer. The cofactor is Zn(2+). Expressed by the venom gland.

It localises to the secreted. Inhibited by 1,10-phenanthroline. In terms of biological role, zinc metalloprotease. Provoques deadhesion of endothelial cells from cell cultures, and also degradation of fibronectin, fibrinogen and gelatin in vitro. Its role in the venom is not fully understood but it might act as a spreading factor that facilitates diffusion of other venom toxins. Alternatively, it might be involved in the proteolytic processing of other venom toxins or it might play a role in extra-oral digestion of prey. This Loxosceles intermedia (Brown spider) protein is Astacin-like metalloprotease toxin 1.